The following is a 344-amino-acid chain: Zinc metalloproteinase nas-6 (344 aa).

The signal sequence occupies residues 1 to 19; it reads MLDHVLLLTYCLVSTVVRS. Residues 72–266 enclose the Peptidase M12A domain; the sequence is NALKNKQLTW…VKINKLYSCK (195 aa). 5 cysteine pairs are disulfide-bonded: C114-C265, C135-C154, C300-C334, C307-C327, and C314-C331. H162 contacts Zn(2+). E163 is a catalytic residue. Zn(2+) contacts are provided by H166 and H172. The 35-residue stretch at 300-334 folds into the ShKT domain; it reads CVDHFADCPHFAQYCTRASFFFVMKSYCPFTCKHC.

The cofactor is Zn(2+). Expressed in pharyngeal and body wall muscles, intestine, hypodermis and pharyngeal mc2 cells.

It localises to the secreted. Metalloprotease. The polypeptide is Zinc metalloproteinase nas-6 (nas-6) (Caenorhabditis elegans).